The primary structure comprises 86 residues: Toxin Td8 (86 aa).

The first 20 residues, 1–20 (MTRFVLFLSCFFLIGMVVEC), serve as a signal peptide directing secretion. The LCN-type CS-alpha/beta domain occupies 21–83 (KDGYLVGDDG…IWNSATNRCR (63 aa)). 4 disulfide bridges follow: C31–C82, C35–C57, C43–C63, and C47–C65. R83 bears the Arginine amide mark.

Expressed by the venom gland.

The protein localises to the secreted. Its function is as follows. Beta toxins bind voltage-independently at site-4 of sodium channels (Nav) and shift the voltage of activation toward more negative potentials thereby affecting sodium channel activation and promoting spontaneous and repetitive firing. The sequence is that of Toxin Td8 from Tityus discrepans (Venezuelan scorpion).